The following is a 79-amino-acid chain: Sec-independent protein translocase protein TatA (79 aa).

Residues 1-21 (MGGISIWQLLIIALIVVLLFG) traverse the membrane as a helical segment. Positions 43-79 (MSSEEDKKALEDTEAAKTAQTTQQATEKKPESNKEQA) are disordered. The segment covering 46-57 (EEDKKALEDTEA) has biased composition (basic and acidic residues). The segment covering 58–67 (AKTAQTTQQA) has biased composition (low complexity). Over residues 68–79 (TEKKPESNKEQA) the composition is skewed to basic and acidic residues.

This sequence belongs to the TatA/E family. In terms of assembly, the Tat system comprises two distinct complexes: a TatABC complex, containing multiple copies of TatA, TatB and TatC subunits, and a separate TatA complex, containing only TatA subunits. Substrates initially bind to the TatABC complex, which probably triggers association of the separate TatA complex to form the active translocon.

The protein resides in the cell inner membrane. Part of the twin-arginine translocation (Tat) system that transports large folded proteins containing a characteristic twin-arginine motif in their signal peptide across membranes. TatA could form the protein-conducting channel of the Tat system. The chain is Sec-independent protein translocase protein TatA from Shewanella putrefaciens (strain CN-32 / ATCC BAA-453).